The chain runs to 1151 residues: SCF E3 ubiquitin ligase complex F-box protein GRR1 (1151 aa).

Over residues 1 to 18 (MDQDNNNHNDSNRLHPPD) the composition is skewed to basic and acidic residues. A disordered region spans residues 1–72 (MDQDNNNHND…ATSERNASEV (72 aa)). Residues 38 to 49 (NNNNNNNNNNNN) show a composition bias toward low complexity. Residues 58–72 (RTRETATSERNASEV) show a composition bias toward basic and acidic residues. Ser199 and Ser300 each carry phosphoserine. In terms of domain architecture, F-box spans 314–361 (VFALNMLPSEILHLILDKLNQKYDIVKFLTVSKLWAEIIVKILYYRPH). LRR repeat units follow at residues 399-423 (GDYM…TLVF), 424-449 (CKHI…DITG), 450-475 (IRDV…YVPQ), 476-501 (ARNV…KITA), 502-527 (NNNM…DITL), 528-553 (SPNV…RITH), 554-582 (NTNI…DLSG), 583-608 (CENI…FLGK), 609-634 (CSRI…HFGH), 635-660 (CFNI…DFAC), 661-685 (CTNL…GLVK), 686-714 (CTQM…HLSY), and 715-740 (CSNL…SLTA). Over residues 1066–1080 (AGANDTSNNETNNGN) the composition is skewed to low complexity. Disordered regions lie at residues 1066-1090 (AGAN…NPNF) and 1118-1151 (VRNN…EDML).

As to quaternary structure, interacts with SKP1. Component of the probable SCF(GRR1) complex containing CDC53, SKP1, RBX1 and GRR1.

Its subcellular location is the membrane. Its pathway is protein modification; protein ubiquitination. In terms of biological role, substrate recognition component of a SCF (SKP1-CUL1-F-box protein) E3 ubiquitin-protein ligase complex which mediates the ubiquitination and subsequent proteasomal degradation of target proteins. Recognizes and directs ubiquitination of phosphorylated CLN1, CLN2 and GIC2. Probably constitutes the primary response element required for the generation or interpretation of the signal that induces glucose repression. This is SCF E3 ubiquitin ligase complex F-box protein GRR1 (GRR1) from Saccharomyces cerevisiae (strain ATCC 204508 / S288c) (Baker's yeast).